Consider the following 234-residue polypeptide: Putative ankyrin repeat protein RF_0063 (234 aa).

ANK repeat units lie at residues 149–180 and 184–213; these read NNNT…TISI and YNNT…QKAL.

The chain is Putative ankyrin repeat protein RF_0063 from Rickettsia felis (strain ATCC VR-1525 / URRWXCal2) (Rickettsia azadi).